Reading from the N-terminus, the 446-residue chain is Exodeoxyribonuclease 7 large subunit (446 aa).

It belongs to the XseA family. In terms of assembly, heterooligomer composed of large and small subunits.

Its subcellular location is the cytoplasm. The enzyme catalyses Exonucleolytic cleavage in either 5'- to 3'- or 3'- to 5'-direction to yield nucleoside 5'-phosphates.. Bidirectionally degrades single-stranded DNA into large acid-insoluble oligonucleotides, which are then degraded further into small acid-soluble oligonucleotides. The chain is Exodeoxyribonuclease 7 large subunit from Ligilactobacillus salivarius (strain UCC118) (Lactobacillus salivarius).